Here is a 202-residue protein sequence, read N- to C-terminus: Large ribosomal subunit protein mL40 (202 aa).

Residues 42 to 79 (IQHQQTASYASKGKSGPPAGMFSGQKAGSKKSKGPKQV) form a disordered region.

This sequence belongs to the mitochondrion-specific ribosomal protein mL40 family. As to quaternary structure, component of the mitochondrial large ribosomal subunit (mt-LSU). Mature N.crassa 74S mitochondrial ribosomes consist of a small (37S) and a large (54S) subunit. The 37S small subunit contains a 16S ribosomal RNA (16S mt-rRNA) and 32 different proteins. The 54S large subunit contains a 23S rRNA (23S mt-rRNA) and 42 different proteins. mL40 is binding to NAD.

It localises to the mitochondrion. In terms of biological role, component of the mitochondrial ribosome (mitoribosome), a dedicated translation machinery responsible for the synthesis of mitochondrial genome-encoded proteins, including at least some of the essential transmembrane subunits of the mitochondrial respiratory chain. The mitoribosomes are attached to the mitochondrial inner membrane and translation products are cotranslationally integrated into the membrane. The protein is Large ribosomal subunit protein mL40 (mrpl28) of Neurospora crassa (strain ATCC 24698 / 74-OR23-1A / CBS 708.71 / DSM 1257 / FGSC 987).